Consider the following 348-residue polypeptide: Dihydroorotase (348 aa).

H13 and H15 together coordinate Zn(2+). Residues 15–17 (HLR) and N41 each bind substrate. Zn(2+)-binding residues include K99, H136, and H174. Residue K99 is modified to N6-carboxylysine. H136 provides a ligand contact to substrate. Substrate is bound at residue L219. D247 lines the Zn(2+) pocket. D247 is a catalytic residue. Substrate-binding residues include H251 and A263.

This sequence belongs to the metallo-dependent hydrolases superfamily. DHOase family. Class II DHOase subfamily. In terms of assembly, homodimer. Zn(2+) serves as cofactor.

It carries out the reaction (S)-dihydroorotate + H2O = N-carbamoyl-L-aspartate + H(+). Its pathway is pyrimidine metabolism; UMP biosynthesis via de novo pathway; (S)-dihydroorotate from bicarbonate: step 3/3. Its function is as follows. Catalyzes the reversible cyclization of carbamoyl aspartate to dihydroorotate. This chain is Dihydroorotase, found in Rhizobium johnstonii (strain DSM 114642 / LMG 32736 / 3841) (Rhizobium leguminosarum bv. viciae).